Here is a 74-residue protein sequence, read N- to C-terminus: Conotoxin MiK41 (74 aa).

The signal sequence occupies residues 1–22 (MKLTCVLIITVLFLTACQLTTA). The propeptide occupies 23 to 45 (VTYSRGEHKHRALMSTGTNYRLP). 3 cysteine pairs are disulfide-bonded: C48-C62, C55-C66, and C61-C73.

It belongs to the conotoxin O1 superfamily. As to expression, expressed by the venom duct.

It is found in the secreted. This chain is Conotoxin MiK41, found in Conus miles (Soldier cone).